The sequence spans 398 residues: KiSS-1 receptor (398 aa).

Over 1 to 46 (MHTVATSGPNASWGAPANASGCPGCGANASDGPVPSPRAVDAWLVP) the chain is Extracellular. N-linked (GlcNAc...) asparagine glycans are attached at residues Asn10, Asn18, and Asn28. A helical transmembrane segment spans residues 47 to 67 (LFFAALMLLGLVGNSLVIYVI). Residues 68-78 (CRHKPMRTVTN) lie on the Cytoplasmic side of the membrane. The helical transmembrane segment at 79 to 101 (FYIANLAATDVTFLLCCVPFTAL) threads the bilayer. The Extracellular segment spans residues 102-120 (LYPLPGWVLGDFMCKFVNY). The cysteines at positions 115 and 191 are disulfide-linked. The helical transmembrane segment at 121-138 (IQQVSVQATCATLTAMSV) threads the bilayer. Topologically, residues 139-157 (DRWYVTVFPLRALHRRTPR) are cytoplasmic. The chain crosses the membrane as a helical span at residues 158-178 (LALAVSLSIWVGSAAVSAPVL). Topologically, residues 179 to 202 (ALHRLSPGPRAYCSEAFPSRALER) are extracellular. A helical transmembrane segment spans residues 203–223 (AFALYNLLALYLLPLLATCAC). At 224–263 (YAAMLRHLGRVAVRPAPADSALQGQVLAERAGAVRAKVSR) the chain is on the cytoplasmic side. A helical transmembrane segment spans residues 264–284 (LVAAVVLLFAACWGPIQLFLV). The Extracellular segment spans residues 285 to 305 (LQALGPAGSWHPRSYAAYALK). A helical transmembrane segment spans residues 306–328 (TWAHCMSYSNSALNPLLYAFLGS). Topologically, residues 329–398 (HFRQAFRRVC…CVLGEDNAPL (70 aa)) are cytoplasmic. A disordered region spans residues 341 to 363 (APRRPRRPRRPGPSDPAAPHAEL).

It belongs to the G-protein coupled receptor 1 family. As to expression, most highly expressed in the pancreas, placenta and spinal cord, with lower-level of expression in peripheral blood leukocytes, kidney, lung, fetal liver, stomach, small intestine, testes, spleen, thymus, adrenal glands and lymph nodes. In the adult brain, expressed in the superior frontal gyrus, putamen, caudate nucleus, cingulate gyrus, nucleus accumbens, hippocampus, pons and amygdala, as well as the hypothalamus and pituitary. Expression levels are higher in early (7-9 weeks) than term placentas. Expression levels were increased in both early placentas and molar pregnancies and were reduced in choriocarcinoma cells. Expressed at higher levels in first trimester trophoblasts than at term of gestation. Also found in the extravillous trophoblast suggesting endocrine/paracrine activation mechanism.

It localises to the cell membrane. Functionally, receptor for metastin (kisspeptin-54 or kp-54), a C-terminally amidated peptide of KiSS1. KiSS1 is a metastasis suppressor protein that suppresses metastases in malignant melanomas and in some breast carcinomas without affecting tumorigenicity. The metastasis suppressor properties may be mediated in part by cell cycle arrest and induction of apoptosis in malignant cells. The receptor is essential for normal gonadotropin-released hormone physiology and for puberty. The hypothalamic KiSS1/KISS1R system is a pivotal factor in central regulation of the gonadotropic axis at puberty and in adulthood. The receptor is also probably involved in the regulation and fine-tuning of trophoblast invasion generated by the trophoblast itself. Analysis of the transduction pathways activated by the receptor identifies coupling to phospholipase C and intracellular calcium release through pertussis toxin-insensitive G(q) proteins. The polypeptide is KiSS-1 receptor (KISS1R) (Homo sapiens (Human)).